The following is a 159-amino-acid chain: Ribosomal RNA large subunit methyltransferase H (159 aa).

S-adenosyl-L-methionine is bound by residues Leu-76 and Gly-108.

This sequence belongs to the RNA methyltransferase RlmH family. As to quaternary structure, homodimer.

It localises to the cytoplasm. The catalysed reaction is pseudouridine(1915) in 23S rRNA + S-adenosyl-L-methionine = N(3)-methylpseudouridine(1915) in 23S rRNA + S-adenosyl-L-homocysteine + H(+). Specifically methylates the pseudouridine at position 1915 (m3Psi1915) in 23S rRNA. This chain is Ribosomal RNA large subunit methyltransferase H, found in Pediococcus pentosaceus (strain ATCC 25745 / CCUG 21536 / LMG 10740 / 183-1w).